The sequence spans 124 residues: Small ribosomal subunit protein uS12 (124 aa).

Aspartate 89 bears the 3-methylthioaspartic acid mark.

The protein belongs to the universal ribosomal protein uS12 family. In terms of assembly, part of the 30S ribosomal subunit. Contacts proteins S8 and S17. May interact with IF1 in the 30S initiation complex.

With S4 and S5 plays an important role in translational accuracy. Functionally, interacts with and stabilizes bases of the 16S rRNA that are involved in tRNA selection in the A site and with the mRNA backbone. Located at the interface of the 30S and 50S subunits, it traverses the body of the 30S subunit contacting proteins on the other side and probably holding the rRNA structure together. The combined cluster of proteins S8, S12 and S17 appears to hold together the shoulder and platform of the 30S subunit. This Hydrogenovibrio crunogenus (strain DSM 25203 / XCL-2) (Thiomicrospira crunogena) protein is Small ribosomal subunit protein uS12.